The sequence spans 200 residues: ASI1-immunoprecipitated protein 1 (200 aa).

The RRM domain occupies 18–101 (RTVYVDELTP…RPVRACAAEP (84 aa)).

In terms of assembly, component of the ASI1-AIPP1-EDM2 (AAE) RNA regulatory complex composed of at least AIPP1/EDM3, ASI1 and EDM2 and may contain CPL2, AIPP2 and AIPP3/BDT1. Binds directly to ASI1 and EDM2 and may function as a bridge protein between them. Co-associates with EDM2 to histone H3 lysine 9 dimethylation (H3K9me2)-marked chromatin and transcripts at a critical proximal polyadenylation site of RPP7 to hamper proximal transcript polyadeylation/termination.

The protein localises to the nucleus. Its function is as follows. Prevents gene silencing by suppressing CHG methylation as well as histone H3 lysine 9 dimethylation (H3K9me2) status at target loci. Collaboratively with ASI1 and EDM2, the AAE complex regulates alternative RNA processing (e.g. alternative splicing) and epigenetic silencing (e.g. H3K9me2) of intronic heterochromatin-containing genes as well as genic heterochromatin-containing genes by promoting distal 3' polyadenylation, thus being required for the accumulation of their full-length transcripts. May also modulate transposable elements (TE) expression. Mediates RPP7-dependent race-specific disease resistance by promoting histone H3 lysine 9 dimethylation (H3K9me2) at the proximal RPP7 polyadenylation site, thus controlling alternative polyadenylation of RPP7 immune receptor transcripts and facilitating 2-phosphoserine RNAPII occupancy. In cv. Columbia, required for RPP7-dependent disease resistance against the Hyaloperonospora arabidopsidis isolate Hiks1. The protein is ASI1-immunoprecipitated protein 1 of Arabidopsis thaliana (Mouse-ear cress).